A 314-amino-acid polypeptide reads, in one-letter code: uncharacterized protein (314 aa).

A mitochondrion-targeting transit peptide spans 1 to 29; the sequence is MMRLIRTLPLRCFKTRIRRQGSLLCLRCF. The interval 52–74 is disordered; the sequence is SSSPLSKNKEKQEKPEKENEGKH. Residues 58 to 74 are compositionally biased toward basic and acidic residues; sequence KNKEKQEKPEKENEGKH. Residues 177 to 207 are a coiled coil; that stretch reads LNEHHLQLLKLKRELNSIHDELNEIIIDLLQ. The chain crosses the membrane as a helical span at residues 262-279; that stretch reads GLLVILVLVCSIMIGVSA. The segment at 281-314 is disordered; sequence KKERPGLQEPEEPEILAPKEDIDTTFPQDQHDID.

It localises to the mitochondrion membrane. This is an uncharacterized protein from Saccharomyces cerevisiae (strain ATCC 204508 / S288c) (Baker's yeast).